A 304-amino-acid chain; its full sequence is Calcium release-activated calcium channel protein 1 (304 aa).

The segment covering 1–11 (MHPEPAPPPNN) has biased composition (pro residues). Positions 1-49 (MHPEPAPPPNNSNPELPLSGGSSTSGSRRSRRRSGDGEPTGAPPLPPPP) are disordered. The Cytoplasmic portion of the chain corresponds to 1–88 (MHPEPAPPPN…KLYLSRAKLK (88 aa)). Residues 3–49 (PEPAPPPNNSNPELPLSGGSSTSGSRRSRRRSGDGEPTGAPPLPPPP) form a required for generation of inwardly rectifying CRAC currents region. A compositionally biased stretch (low complexity) spans 12–27 (SNPELPLSGGSSTSGS). The AKAP5 association region stretch occupies residues 39 to 60 (PTGAPPLPPPPAVSYPDWIGQS). The interval 71-91 (SMQALSWRKLYLSRAKLKASS) is interaction with STIM1. The chain crosses the membrane as a helical span at residues 89–106 (ASSRTSALLSGFAMVAMV). At 107 to 120 (EVQLDTDHDYPPGL) the chain is on the extracellular side. Residues 121–141 (LIVFSACTTVLVAVHLFALMI) traverse the membrane as a helical segment. Residues 142–174 (STCILPNIEAVSNVHNLNSVKESPHERMHRHIE) are Cytoplasmic-facing. A helical membrane pass occupies residues 175 to 195 (LAWAFSTVIGTLLFLAEVVLL). Residues 196–237 (CWVKFLPLKRQAGQPSPTKPPTEPAVVVANSSNNGGITPGEA) are Extracellular-facing. Residue N225 is glycosylated (N-linked (GlcNAc...) asparagine). A helical membrane pass occupies residues 238–258 (AAIASTAIMVPCGLVFIVFAV). Over 259-304 (HFYRSLVSHKTDRQFQELNELAEFARLQDQLDHRGDHSLTPGTHYA) the chain is Cytoplasmic. Residues 275-295 (ELNELAEFARLQDQLDHRGDH) are interaction with STIM1. T298 bears the Phosphothreonine mark.

This sequence belongs to the Orai family. Oligomerizes in homomeric and heteromeric ORAI complexes. Native CRAC channels most likely consist of hexameric ORAI heteromers, implying that diverse ORAI1, ORAI2 and ORAI3 subunit combinations with distinct biophysical properties can operate in a cell-type specific way. ARC channels are heteropentamers consisting of three ORAI1 and two ORAI3 subunits. Interacts with STIM1 and STIM2; this regulates channel activity. Interacts with CALM; this may displace STIM1 and STIM2 and might thereby modulate channel activity. Interacts (via N-terminus) with AKAP5 upon store depletion. Interacts with CRACR2A/EFCAB4B; the interaction is direct and takes place in absence of Ca(2+). Forms a complex with CRACR2A/EFCAB4B and STIM1 at low concentration of Ca(2+), the complex dissociates at elevated Ca(2+) concentrations. Interacts with ASPH (isoform 8). Interacts with SLC35G1. Interacts with UBQLN1. Interacts with ADCY8; interaction is calcium store depletion independent; interaction occurs in membrane raft; interaction increases markedly after store depletion; positively regulates SOCE-induced adenylate cyclase activity; contributes to the targeting of ADCY8 to discrete regions of the plasma membrane that are shielded from other calcium events. Interacts with EFHB; the interaction takes place upon Ca(2+)-store depletion. Interacts (via N- and C-termini) with ATP2C2 (via N-terminus); this interaction regulates Ca(2+) influx at the plasma membrane. Interacts with TSPAN18; this interaction regulates ORAI1 exit from the endoplasmic (ER), and/or Golgi, and trafficking to the cell surface. N-glycosylated. N-glycosylation inhibits channel activity in T cells. Post-translationally, ubiquitinated. In terms of processing, cys-195 is oxidated, leading to inactivation of channel activity.

The protein localises to the cell membrane. It is found in the basolateral cell membrane. It catalyses the reaction Ca(2+)(in) = Ca(2+)(out). Its activity is regulated as follows. Oxidation at Cys-196 leads to inactivation of channel activity. Functionally, pore-forming subunit of two major inward rectifying Ca(2+) channels at the plasma membrane: Ca(2+) release-activated Ca(2+) (CRAC) channels and arachidonate-regulated Ca(2+)-selective (ARC) channels. Assembles with ORAI2 and ORAI3 to form hexameric CRAC channels that mediate Ca(2+) influx upon depletion of endoplasmic reticulum Ca(2+) store and channel activation by Ca(2+) sensor STIM1, a process known as store-operated Ca(2+) entry (SOCE). Various pore subunit combinations may account for distinct CRAC channel spatiotemporal and cell-type specific dynamics. ORAI1 mainly contributes to the generation of Ca(2+) plateaus involved in sustained Ca(2+) entry and is dispensable for cytosolic Ca(2+) oscillations, whereas ORAI2 and ORAI3 generate oscillatory patterns. CRAC channels assemble in Ca(2+) signaling microdomains where Ca(2+) influx is coupled to calmodulin and calcineurin signaling and activation of NFAT transcription factors recruited to ORAI1 via AKAP5. Activates NFATC2/NFAT1 and NFATC3/NFAT4-mediated transcriptional responses. CRAC channels are the main pathway for Ca(2+) influx in T cells and promote the immune response to pathogens by activating NFAT-dependent cytokine and chemokine transcription. Assembles with ORAI3 to form channels that mediate store-independent Ca(2+) influx in response to inflammatory metabolites arachidonate or its derivative leukotriene C4, termed ARC and LRC channels respectively. Plays a prominent role in Ca(2+) influx at the basolateral membrane of mammary epithelial cells independently of the Ca(2+) content of endoplasmic reticulum or Golgi stores. May mediate transepithelial transport of large quantities of Ca(2+) for milk secretion. This chain is Calcium release-activated calcium channel protein 1 (Orai1), found in Rattus norvegicus (Rat).